The following is a 421-amino-acid chain: 4-hydroxy-3-methylbut-2-en-1-yl diphosphate synthase (flavodoxin) (421 aa).

4 residues coordinate [4Fe-4S] cluster: Cys-298, Cys-301, Cys-344, and Glu-351.

The protein belongs to the IspG family. [4Fe-4S] cluster is required as a cofactor.

It carries out the reaction (2E)-4-hydroxy-3-methylbut-2-enyl diphosphate + oxidized [flavodoxin] + H2O + 2 H(+) = 2-C-methyl-D-erythritol 2,4-cyclic diphosphate + reduced [flavodoxin]. It functions in the pathway isoprenoid biosynthesis; isopentenyl diphosphate biosynthesis via DXP pathway; isopentenyl diphosphate from 1-deoxy-D-xylulose 5-phosphate: step 5/6. Functionally, converts 2C-methyl-D-erythritol 2,4-cyclodiphosphate (ME-2,4cPP) into 1-hydroxy-2-methyl-2-(E)-butenyl 4-diphosphate. The protein is 4-hydroxy-3-methylbut-2-en-1-yl diphosphate synthase (flavodoxin) of Neisseria meningitidis serogroup C (strain 053442).